We begin with the raw amino-acid sequence, 584 residues long: Kelch domain-containing protein 4 (584 aa).

Basic residues predominate over residues 1–10 (MGKKGKKEKK). 2 disordered regions span residues 1-33 (MGKK…RKEE) and 50-69 (KTQV…NASL). The segment covering 11–24 (GRGAEKTAAKMEKK) has biased composition (basic and acidic residues). Kelch repeat units lie at residues 77 to 129 (ELIL…VVPQ), 133 to 187 (QLWV…AWKR), 188 to 238 (QLIL…LMAV), 243 to 289 (SIAI…INPS), and 308 to 361 (QILV…RRGK). Disordered regions lie at residues 348 to 381 (KGPK…APEP), 405 to 433 (SGLG…CPRS), and 482 to 533 (PKSQ…EQFE). At Ser-418 the chain carries Phosphoserine. A Kelch 6 repeat occupies 443-494 (LLYVYGGMFEAGDRQVTLSDLYCLDLHKMEEWKTLVEMDPKSQEWLEESDSE). The span at 487–519 (WLEESDSEEDSSSDEESEDGEDKDQEDSAEEGA) shows a compositional bias: acidic residues. The segment covering 520–533 (DPQHPEVARGEQFE) has biased composition (basic and acidic residues).

This Mus musculus (Mouse) protein is Kelch domain-containing protein 4 (Klhdc4).